Consider the following 228-residue polypeptide: Ribonuclease 3 1 (228 aa).

The 124-residue stretch at 1 to 124 folds into the RNase III domain; the sequence is MYKLLMFRDD…VIGAYYLDNN (124 aa). Glu-37 is a binding site for Mg(2+). Asp-41 is a catalytic residue. Ser-110 and Glu-113 together coordinate Mg(2+). The active site involves Glu-113. The DRBM domain maps to 153–223; that stretch reads DSKNRFQEWV…AENALANLNK (71 aa).

Belongs to the ribonuclease III family. Homodimer. Mg(2+) serves as cofactor.

It is found in the cytoplasm. It catalyses the reaction Endonucleolytic cleavage to 5'-phosphomonoester.. Functionally, digests double-stranded RNA. Involved in the processing of primary rRNA transcript to yield the immediate precursors to the large and small rRNAs (23S and 16S). Processes some mRNAs, and tRNAs when they are encoded in the rRNA operon. Processes pre-crRNA and tracrRNA of type II CRISPR loci if present in the organism. This is Ribonuclease 3 1 from Nostoc sp. (strain PCC 7120 / SAG 25.82 / UTEX 2576).